Consider the following 122-residue polypeptide: uncharacterized protein (122 aa).

The disordered stretch occupies residues 97–122 (TSRNGFSNPNKDGKKNDDDNNSSSKS).

This is an uncharacterized protein from Mycoplasma genitalium (strain ATCC 33530 / DSM 19775 / NCTC 10195 / G37) (Mycoplasmoides genitalium).